Reading from the N-terminus, the 120-residue chain is Small ribosomal subunit protein uS13 (120 aa).

The disordered stretch occupies residues 94–120 (GLPLRGQRTRTNARTRKGPRKAIAGKK).

The protein belongs to the universal ribosomal protein uS13 family. Part of the 30S ribosomal subunit. Forms a loose heterodimer with protein S19. Forms two bridges to the 50S subunit in the 70S ribosome.

Located at the top of the head of the 30S subunit, it contacts several helices of the 16S rRNA. In the 70S ribosome it contacts the 23S rRNA (bridge B1a) and protein L5 of the 50S subunit (bridge B1b), connecting the 2 subunits; these bridges are implicated in subunit movement. Contacts the tRNAs in the A and P-sites. This Azoarcus sp. (strain BH72) protein is Small ribosomal subunit protein uS13.